The primary structure comprises 198 residues: Nucleoid occlusion factor SlmA (198 aa).

In terms of domain architecture, HTH tetR-type spans 10 to 70 (NRREEILQSL…SLIEFIEDSL (61 aa)). A DNA-binding region (H-T-H motif) is located at residues 33 to 52 (TTAKLAASVGVSEAALYRHF). The stretch at 117-144 (EQDRLQGRINQLFERIEAQLRQVLREKR) forms a coiled coil.

This sequence belongs to the nucleoid occlusion factor SlmA family. Homodimer. Interacts with FtsZ.

Its subcellular location is the cytoplasm. The protein localises to the nucleoid. Required for nucleoid occlusion (NO) phenomenon, which prevents Z-ring formation and cell division over the nucleoid. Acts as a DNA-associated cell division inhibitor that binds simultaneously chromosomal DNA and FtsZ, and disrupts the assembly of FtsZ polymers. SlmA-DNA-binding sequences (SBS) are dispersed on non-Ter regions of the chromosome, preventing FtsZ polymerization at these regions. The chain is Nucleoid occlusion factor SlmA from Salmonella paratyphi A (strain ATCC 9150 / SARB42).